The chain runs to 224 residues: Ribose-5-phosphate isomerase A (224 aa).

Residues 32–35 (TGST), 85–88 (DGAD), and 98–101 (KGGG) each bind substrate. Glu-107 (proton acceptor) is an active-site residue. Residue Lys-125 coordinates substrate.

It belongs to the ribose 5-phosphate isomerase family. Homodimer.

It catalyses the reaction aldehydo-D-ribose 5-phosphate = D-ribulose 5-phosphate. It participates in carbohydrate degradation; pentose phosphate pathway; D-ribose 5-phosphate from D-ribulose 5-phosphate (non-oxidative stage): step 1/1. Its function is as follows. Catalyzes the reversible conversion of ribose-5-phosphate to ribulose 5-phosphate. The chain is Ribose-5-phosphate isomerase A from Pseudomonas putida (strain ATCC 700007 / DSM 6899 / JCM 31910 / BCRC 17059 / LMG 24140 / F1).